The chain runs to 393 residues: Tryptophan synthase beta chain (393 aa).

At Lys85 the chain carries N6-(pyridoxal phosphate)lysine.

The protein belongs to the TrpB family. As to quaternary structure, tetramer of two alpha and two beta chains. Requires pyridoxal 5'-phosphate as cofactor.

The catalysed reaction is (1S,2R)-1-C-(indol-3-yl)glycerol 3-phosphate + L-serine = D-glyceraldehyde 3-phosphate + L-tryptophan + H2O. It functions in the pathway amino-acid biosynthesis; L-tryptophan biosynthesis; L-tryptophan from chorismate: step 5/5. In terms of biological role, the beta subunit is responsible for the synthesis of L-tryptophan from indole and L-serine. The sequence is that of Tryptophan synthase beta chain (trpB) from Helicobacter pylori (strain J99 / ATCC 700824) (Campylobacter pylori J99).